We begin with the raw amino-acid sequence, 389 residues long: Tryptophan 2,3-dioxygenase (389 aa).

Substrate-binding positions include 60–64 and Arg-131; that span reads FIITH. Residue His-316 coordinates heme. Thr-331 contacts substrate.

The protein belongs to the tryptophan 2,3-dioxygenase family. As to quaternary structure, homotetramer. Dimer of dimers. Heme is required as a cofactor.

It catalyses the reaction L-tryptophan + O2 = N-formyl-L-kynurenine. Its pathway is amino-acid degradation; L-tryptophan degradation via kynurenine pathway; L-kynurenine from L-tryptophan: step 1/2. The protein operates within pigment biosynthesis; ommochrome biosynthesis. Heme-dependent dioxygenase that catalyzes the oxidative cleavage of the L-tryptophan (L-Trp) pyrrole ring and converts L-tryptophan to N-formyl-L-kynurenine. Catalyzes the oxidative cleavage of the indole moiety. This chain is Tryptophan 2,3-dioxygenase, found in Mayetiola destructor (Hessian fly).